The following is a 405-amino-acid chain: Imidazolonepropionase (405 aa).

Fe(3+) contacts are provided by His70 and His72. 2 residues coordinate Zn(2+): His70 and His72. The 4-imidazolone-5-propanoate site is built by Arg79, Tyr142, and His175. Tyr142 provides a ligand contact to N-formimidoyl-L-glutamate. Position 240 (His240) interacts with Fe(3+). His240 lines the Zn(2+) pocket. 4-imidazolone-5-propanoate is bound at residue Gln243. Position 315 (Asp315) interacts with Fe(3+). Residue Asp315 participates in Zn(2+) binding. Positions 317 and 319 each coordinate N-formimidoyl-L-glutamate. Thr320 serves as a coordination point for 4-imidazolone-5-propanoate.

This sequence belongs to the metallo-dependent hydrolases superfamily. HutI family. Requires Zn(2+) as cofactor. Fe(3+) serves as cofactor.

Its subcellular location is the cytoplasm. It catalyses the reaction 4-imidazolone-5-propanoate + H2O = N-formimidoyl-L-glutamate. It participates in amino-acid degradation; L-histidine degradation into L-glutamate; N-formimidoyl-L-glutamate from L-histidine: step 3/3. Its function is as follows. Catalyzes the hydrolytic cleavage of the carbon-nitrogen bond in imidazolone-5-propanoate to yield N-formimidoyl-L-glutamate. It is the third step in the universal histidine degradation pathway. This is Imidazolonepropionase from Ectopseudomonas mendocina (strain ymp) (Pseudomonas mendocina).